The sequence spans 286 residues: Single myb histone 5 (286 aa).

The 61-residue stretch at 1-61 folds into the HTH myb-type domain; sequence MGAPKQRWTS…KWRNMNVIVT (61 aa). The segment at residues 28–57 is a DNA-binding region (H-T-H motif); that stretch reads WRMILNDPELSSTLRYRSNVDLKDKWRNMN. One can recognise an H15 domain in the interval 122–190; sequence SHSRLDNIIM…KVNRKYRIAP (69 aa). Residues 229–277 adopt a coiled-coil conformation; it reads EAAAAAAAHAVAEAEAIMAEAEAAAREAEAAEAEARAAQAFAEAAVLTL.

It belongs to the histone H1/H5 family. SMH subfamily. Forms a homodimer and heterodimers.

The protein resides in the nucleus. It is found in the chromosome. The protein localises to the nucleolus. Its subcellular location is the telomere. Functionally, binds preferentially double-stranded telomeric repeats, but may also bind to the single telomeric strand. The sequence is that of Single myb histone 5 (SMH5) from Zea mays (Maize).